The chain runs to 496 residues: uncharacterized protein (496 aa).

Over residues 118–129 the composition is skewed to basic and acidic residues; sequence LDRPFIKPRREN. Residues 118–187 are disordered; that stretch reads LDRPFIKPRR…NPHQSNRNTS (70 aa). Positions 151–187 are enriched in polar residues; the sequence is TSDSQYASPFENHSITNLPIGQKQPFNNPHQSNRNTS.

This is an uncharacterized protein from Acanthamoeba polyphaga mimivirus (APMV).